A 717-amino-acid polypeptide reads, in one-letter code: Glutamate--cysteine ligase (717 aa).

A disordered region spans residues 484 to 576 (SKTTEQRAAK…TDSDHTDTDD (93 aa)). Composition is skewed to low complexity over residues 492–518 (AKAQ…NGNG) and 551–567 (GTTN…SNGT).

This sequence belongs to the glutamate--cysteine ligase type 3 family.

The catalysed reaction is L-cysteine + L-glutamate + ATP = gamma-L-glutamyl-L-cysteine + ADP + phosphate + H(+). The enzyme catalyses (2S)-2-aminobutanoate + L-glutamate + ATP = gamma-L-glutamyl-(2S)-2-aminobutanoate + ADP + phosphate + H(+). It participates in sulfur metabolism; glutathione biosynthesis; glutathione from L-cysteine and L-glutamate: step 1/2. Its function is as follows. Catalyzes the ATP-dependent ligation of L-glutamate and L-cysteine and participates in the first and rate-limiting step in glutathione biosynthesis. This Drosophila melanogaster (Fruit fly) protein is Glutamate--cysteine ligase.